The following is a 775-amino-acid chain: 5-methyltetrahydropteroyltriglutamate--homocysteine methyltransferase (775 aa).

5-methyltetrahydropteroyltri-L-glutamate contacts are provided by residues 16–19 (REMK) and K115. Residues 435 to 437 (IGS) and E488 each bind L-homocysteine. Residues 435-437 (IGS) and E488 contribute to the L-methionine site. Residues 519–520 (RC) and W565 each bind 5-methyltetrahydropteroyltri-L-glutamate. Residue D603 coordinates L-homocysteine. D603 lines the L-methionine pocket. E609 serves as a coordination point for 5-methyltetrahydropteroyltri-L-glutamate. The Zn(2+) site is built by H645, C647, and E669. H698 serves as the catalytic Proton donor. C730 lines the Zn(2+) pocket.

This sequence belongs to the vitamin-B12 independent methionine synthase family. It depends on Zn(2+) as a cofactor.

The enzyme catalyses 5-methyltetrahydropteroyltri-L-glutamate + L-homocysteine = tetrahydropteroyltri-L-glutamate + L-methionine. The protein operates within amino-acid biosynthesis; L-methionine biosynthesis via de novo pathway; L-methionine from L-homocysteine (MetE route): step 1/1. Functionally, catalyzes the transfer of a methyl group from 5-methyltetrahydrofolate to homocysteine resulting in methionine formation. This is 5-methyltetrahydropteroyltriglutamate--homocysteine methyltransferase from Coxiella burnetii (strain RSA 331 / Henzerling II).